The sequence spans 419 residues: Erythromycin esterase type II (419 aa).

Its function is as follows. This enzyme confers resistance to erythromycin through inactivation by hydrolyzing the lactone ring of the antibiotic. In Escherichia coli, this protein is Erythromycin esterase type II (ereB).